The chain runs to 394 residues: MISQQTIDIVKATAPVVAETGPKLTAHFYERMFNHNPELKDIFNMSNQRNGDQREALFNAICAYANNIDNLAALLPAVEKIAHKHTSFMITAEQYQIVGGHLLATIDELLSPGQEVLDAWGEAYGVLANVFITREEAIYQENEEKTGGWRGTREFTLIEKTQESDVITSFTFKPADGGTVSNFKPGQYLGIYLTPDAFEFQEIRQYSLSSAPRTDNYRISVKREEGGKVSNYLHNELTVGDTVQLAAPAGDFFLDVPATTPVTLISAGVGLTPTLSMLDALTEHQASVHWLHATENGSHHAFKDYVNTLADKYDHISATTWYREPLATDRPAEDFDYQGMIDLKAVASQLIDPAMHYYFCGPVGFMQHVAKQLIELDVQEDNIHYECFGPHKVL.

Residues 1–136 form the Globin domain; it reads MISQQTIDIV…LANVFITREE (136 aa). Histidine 85 is a binding site for heme b. Active-site charge relay system residues include tyrosine 95 and glutamate 135. The tract at residues 147 to 394 is reductase; the sequence is GGWRGTREFT…YECFGPHKVL (248 aa). Residues 150–255 enclose the FAD-binding FR-type domain; it reads RGTREFTLIE…AAPAGDFFLD (106 aa). FAD-binding positions include tyrosine 188 and 204 to 207; that span reads RQYS. Position 268–273 (268–273) interacts with NADP(+); sequence GVGLTP. 387–390 contributes to the FAD binding site; the sequence is CFGP.

This sequence belongs to the globin family. Two-domain flavohemoproteins subfamily. The protein in the C-terminal section; belongs to the flavoprotein pyridine nucleotide cytochrome reductase family. Heme b serves as cofactor. Requires FAD as cofactor.

It catalyses the reaction 2 nitric oxide + NADPH + 2 O2 = 2 nitrate + NADP(+) + H(+). It carries out the reaction 2 nitric oxide + NADH + 2 O2 = 2 nitrate + NAD(+) + H(+). Is involved in NO detoxification in an aerobic process, termed nitric oxide dioxygenase (NOD) reaction that utilizes O(2) and NAD(P)H to convert NO to nitrate, which protects the bacterium from various noxious nitrogen compounds. Therefore, plays a central role in the inducible response to nitrosative stress. The protein is Flavohemoprotein of Photobacterium profundum (strain SS9).